The sequence spans 565 residues: MPQASEHRLGRTREPPLNIQPRVGSKLPFAPRARSKERRNPAPGPNPMLRPLPPRPGPPEERLKKLELGRGRTSGPRPSGPLRADHGVPLPGSPPPTVALPLPSRTNLARSKSVSSGDLRPMGIALGGHRGTGELGAALSRLALRPEPPPLRRSTSLRRLGGFPGPPTLFSIRTEPPTPHGSFHVISARPSEPFYSDDKMAHHTLLLGSGHVGLRNLGNTCFLNALLQCLSSTRPLRDFCLRRDFRQEVPGGGRAQELTEAFADVIGALWHPDSCEAVNPTRFRAVFQKYVPSFSGYSQQDAQEFLKLLMERLHLEINRRGRRAPPILASSPAPHPPRLGGALLEEPELSDDDRANLMWKRYLEREDSKIVDLFVGQLKSCLKCQACGYRSTTFEVFCDLSLPIPKKGFAGGKVSLRDCFNLFTKEEELESENAPVCDRCRQKTRSTKKLTVQRFPRILVLHLNRFSASRGSIKKSSVGVDFPLQRLSLGDFASDKAGSPVYQLYALCNHSGSVHYGHYTALCRCQTGWHVYNDSRVSPVSENQVASSEGYVLFYQLMQEPPRCL.

Basic and acidic residues predominate over residues 1–14 (MPQASEHRLGRTRE). Disordered stretches follow at residues 1 to 103 (MPQA…LPLP), 109 to 128 (ARSK…ALGG), and 142 to 163 (LALR…LGGF). Residues 42-57 (APGPNPMLRPLPPRPG) show a composition bias toward pro residues. Positions 58–70 (PPEERLKKLELGR) are enriched in basic and acidic residues. Low complexity predominate over residues 71 to 82 (GRTSGPRPSGPL). A Nuclear export signal motif is present at residues 134 to 152 (ELGAALSRLALRPEPPPLR). The USP domain occupies 212-558 (VGLRNLGNTC…EGYVLFYQLM (347 aa)). Residue Cys221 is the Nucleophile of the active site. Zn(2+)-binding residues include Cys384, Cys387, Cys437, and Cys440. His518 acts as the Proton acceptor in catalysis.

This sequence belongs to the peptidase C19 family. USP21 subfamily. Interacts with BEND3.

Its subcellular location is the cytoplasm. It localises to the nucleus. It catalyses the reaction Thiol-dependent hydrolysis of ester, thioester, amide, peptide and isopeptide bonds formed by the C-terminal Gly of ubiquitin (a 76-residue protein attached to proteins as an intracellular targeting signal).. Its function is as follows. Deubiquitinating enzyme that hydrolyzes 'Lys-6'- and 'Lys-11'-linked polyubiquitin. Also hydrolyzes heterotypic (mixed and branched) and homotypic chains. Important regulator of energy metabolism. Glucose and fatty acids trigger its nuclear translocation by CBP-dependent acetylation. In the nucleus, deubiquitinates and stabilizes the nuclear receptor PPARD regulating the expression of various genes involved in glucose and lipid metabolism and oxidative phosphorylation. Also acts as a negative regulator of the ribosome quality control (RQC) by mediating deubiquitination of 40S ribosomal proteins RPS10/eS10 and RPS20/uS10, thereby antagonizing ZNF598-mediated 40S ubiquitination. This chain is Ubiquitin carboxyl-terminal hydrolase 21 (USP21), found in Bos taurus (Bovine).